The primary structure comprises 133 residues: Holo-[acyl-carrier-protein] synthase (133 aa).

Residues aspartate 8 and glutamate 57 each contribute to the Mg(2+) site.

It belongs to the P-Pant transferase superfamily. AcpS family. Requires Mg(2+) as cofactor.

Its subcellular location is the cytoplasm. The enzyme catalyses apo-[ACP] + CoA = holo-[ACP] + adenosine 3',5'-bisphosphate + H(+). In terms of biological role, transfers the 4'-phosphopantetheine moiety from coenzyme A to a Ser of acyl-carrier-protein. The chain is Holo-[acyl-carrier-protein] synthase from Caulobacter vibrioides (strain ATCC 19089 / CIP 103742 / CB 15) (Caulobacter crescentus).